A 25-amino-acid polypeptide reads, in one-letter code: Caerin-1.2 (25 aa).

At Leu-25 the chain carries Leucine amide.

In terms of tissue distribution, expressed by the skin parotoid and/or rostral glands.

Its subcellular location is the secreted. Its function is as follows. Antibacterial peptide, that adopts an alpha helical conformation which can disrupt bacterial membranes. Each caerin displays a different antimicrobial specificity. This Ranoidea caerulea (Green tree frog) protein is Caerin-1.2.